Here is a 64-residue protein sequence, read N- to C-terminus: MPKNKSHSGASKRFKVTGSGKVLRERAGKRHLLEHKSSRLTRRLTGNAEMAPGDAKKIKKLLGK.

Belongs to the bacterial ribosomal protein bL35 family.

This Streptomyces avermitilis (strain ATCC 31267 / DSM 46492 / JCM 5070 / NBRC 14893 / NCIMB 12804 / NRRL 8165 / MA-4680) protein is Large ribosomal subunit protein bL35.